A 97-amino-acid polypeptide reads, in one-letter code: uncharacterized protein (97 aa).

This is an uncharacterized protein from Mycoplasma capricolum subsp. capricolum (strain California kid / ATCC 27343 / NCTC 10154).